The chain runs to 257 residues: Protein MoaE (257 aa).

Residue 6–29 (VITGGGTGIGAACARLMHPAGERV) participates in NAD(+) binding. The segment at 75–96 (LMSSSAAPAGWATAPPPRPATA) is disordered. S132 provides a ligand contact to substrate. Y145 serves as the catalytic Proton acceptor.

This sequence belongs to the short-chain dehydrogenases/reductases (SDR) family.

Functionally, might catalyze the conversion of monoamine compounds or their metabolites. This Klebsiella aerogenes (Enterobacter aerogenes) protein is Protein MoaE (moaE).